Here is a 218-residue protein sequence, read N- to C-terminus: Response regulator UvrY (218 aa).

One can recognise a Response regulatory domain in the interval Asn3–Tyr119. Asp54 carries the post-translational modification 4-aspartylphosphate. The HTH luxR-type domain maps to Thr143–Gly208. The H-T-H motif DNA-binding region spans Val167–Tyr186.

In terms of processing, phosphorylated and activated by BarA.

The protein resides in the cytoplasm. Functionally, member of the two-component regulatory system UvrY/BarA involved in the regulation of carbon metabolism via the CsrA/CsrB regulatory system. UvrY activates the transcription of the untranslated csrB RNA and of barA, in an autoregulatory loop. Mediates the effects of CsrA on csrB RNA by BarA-dependent and BarA-independent mechanisms. The chain is Response regulator UvrY (uvrY) from Escherichia coli O157:H7.